The sequence spans 307 residues: UDP-N-acetylenolpyruvoylglucosamine reductase (307 aa).

An FAD-binding PCMH-type domain is found at 29-197; that stretch reads RVGGPAEWFA…LSARFRLDPG (169 aa). Arg176 is a catalytic residue. Ser227 functions as the Proton donor in the catalytic mechanism. Glu297 is a catalytic residue.

Belongs to the MurB family. FAD is required as a cofactor.

The protein localises to the cytoplasm. The enzyme catalyses UDP-N-acetyl-alpha-D-muramate + NADP(+) = UDP-N-acetyl-3-O-(1-carboxyvinyl)-alpha-D-glucosamine + NADPH + H(+). It participates in cell wall biogenesis; peptidoglycan biosynthesis. Cell wall formation. The protein is UDP-N-acetylenolpyruvoylglucosamine reductase of Prochlorococcus marinus (strain MIT 9313).